A 281-amino-acid polypeptide reads, in one-letter code: Tetraspanin-33 (281 aa).

Residues 1–23 (MGNAKRATQNDEDYTFVSPVVKY) lie on the Cytoplasmic side of the membrane. The chain crosses the membrane as a helical span at residues 24–44 (LLFFFNMIFWIISLVLISIGV). Topologically, residues 45–62 (YSRIVKHETALACLTVDP) are extracellular. A helical membrane pass occupies residues 63 to 83 (ALILMVVGILMFFITFCGCVG). Residues 84 to 94 (SLRENICLLQT) lie on the Cytoplasmic side of the membrane. The helical transmembrane segment at 95-115 (FCIFLTIMFLLQLLAGVLGFV) threads the bilayer. The Extracellular portion of the chain corresponds to 116–233 (FSDKARGKVT…DILVNWIHSN (118 aa)). Disulfide bonds link cysteine 154/cysteine 222, cysteine 155/cysteine 187, cysteine 171/cysteine 181, and cysteine 188/cysteine 201. Asparagine 170 carries N-linked (GlcNAc...) asparagine glycosylation. The helical transmembrane segment at 234-254 (LFLLGGIALGLTIPQLVGILL) threads the bilayer. The Cytoplasmic portion of the chain corresponds to 255-281 (SQVLINQIQDQIKLQNYNQQHRSDPWS).

This sequence belongs to the tetraspanin (TM4SF) family. Homodimer; disulfide-linked.

The protein localises to the cell membrane. Its subcellular location is the cell junction. It localises to the adherens junction. It is found in the cytoplasm. Its function is as follows. Part of TspanC8 subgroup, composed of 6 members that interact with the transmembrane metalloprotease ADAM10. This interaction is required for ADAM10 exit from the endoplasmic reticulum and for enzymatic maturation and trafficking to the cell surface as well as substrate specificity. Different TspanC8/ADAM10 complexes have distinct substrates. This chain is Tetraspanin-33 (tspan33), found in Danio rerio (Zebrafish).